A 110-amino-acid polypeptide reads, in one-letter code: UPF0122 protein BCA_3946 (110 aa).

It belongs to the UPF0122 family.

Might take part in the signal recognition particle (SRP) pathway. This is inferred from the conservation of its genetic proximity to ftsY/ffh. May be a regulatory protein. In Bacillus cereus (strain 03BB102), this protein is UPF0122 protein BCA_3946.